Consider the following 2472-residue polypeptide: Nuclear receptor corepressor 2 (2472 aa).

Disordered stretches follow at residues 1–20 (MSGSTQPVAQTWRAAEPRYP), 47–168 (RDYT…SRLS), and 190–220 (ISKLKKKQQQLEEEAAKPPEPEKPVSPPPIE). R18 carries the post-translational modification Asymmetric dimethylarginine. Polar residues predominate over residues 51 to 60 (SHLSPGSIIQ). Phosphoserine occurs at positions 54 and 67. Composition is skewed to basic and acidic residues over residues 78–88 (RSQELHLRPES) and 96–112 (GKPDIEFTESKRPRLEL). Phosphoserine occurs at positions 149 and 152. The stretch at 165-207 (SRLSKEELIQNMDRVDREITMVEQQISKLKKKQQQLEEEAAKP) forms a coiled coil. Residues 203–212 (EAAKPPEPEK) show a composition bias toward basic and acidic residues. The residue at position 215 (S215) is a Phosphoserine. An interaction with SIN3A/B region spans residues 254–312 (LPLYNQPSDTRQYHENIKINQAMRKKLILYFKRRNHARKQWEQRFCQRYDQLMEAWEKK). Positions 389 to 480 (MRQLAVIPPM…YLTKKNENYK (92 aa)) are deacetylase activation domain (DAD). An SANT 1 domain is found at 427-478 (QVTNMWSEQERDTFREKFMQHPKNFGLIASFLERKTVAECVLYYYLTKKNEN). Residues K449, Y470, and Y471 each coordinate 1D-myo-inositol 1,4,5,6-tetrakisphosphate. 3 disordered regions span residues 487–618 (YRRR…EMET), 665–1107 (HKLK…RPPI), and 1173–1197 (SATSGSITKGLPSTRAADGPSYRGS). The stretch at 492–560 (KSQQQQQQQQ…GEDNDEKEAV (69 aa)) forms a coiled coil. S493 is modified (phosphoserine). The segment covering 494 to 507 (QQQQQQQQQQQQQQ) has biased composition (low complexity). The span at 512 to 548 (SQEEKEEKEKEKEADKEEEKQDAENEKEELSKEKTDD) shows a compositional bias: basic and acidic residues. T549 carries the post-translational modification Phosphothreonine. S550 is modified (phosphoserine). The span at 592 to 609 (ATPQQSSELASMEMNESS) shows a compositional bias: polar residues. Positions 606 to 657 (NESSRWTEEEMETAKKGLLEHGRNWSAIARMVGSKTVSQCKNFYFNYKKRQN) constitute an SANT 2 domain. Positions 658–682 (LDEILQQHKLKMEKERNARRKKKKT) form a coiled coil. A compositionally biased stretch (acidic residues) spans 709–718 (NEEELAEEAE). Polar residues predominate over residues 739–750 (VNNSSDTESVPS). Phosphoserine occurs at positions 747 and 750. Composition is skewed to pro residues over residues 773–782 (TQPPVPPPEE) and 789–811 (EPSPVPDASGPPSPEPSPSPAAP). Composition is skewed to basic and acidic residues over residues 831 to 850 (EDAKEQKSEAEEIDVGKPEE) and 859 to 868 (ESVKSDHKEE). K878 is modified (N6-acetyllysine). The span at 905 to 919 (GSSSGATQDSDSSAT) shows a compositional bias: low complexity. At S938 the chain carries Phosphoserine. The residue at position 945 (T945) is a Phosphothreonine. S955 is subject to Phosphoserine. Position 958 is an N6-acetyllysine (K958). The segment covering 978 to 988 (KVHEPPREDTV) has biased composition (basic and acidic residues). Positions 989 to 1000 (PPKPVPPVPPPT) are enriched in pro residues. The segment covering 1090-1101 (LPLGLHDSARPV) has biased composition (low complexity). N6-acetyllysine is present on residues K1181 and K1209. S1220 is modified (phosphoserine). Disordered stretches follow at residues 1254–1277 (SVSQCSKEDGRSSSGPPHETAAPK), 1345–1378 (LKREGTPPPPPPPRDLTETYKPRPLDPLGPLKLK), and 1410–1443 (PLAPRPLKEGSITQGTPLKYDSGAPSTGTKKHDV). At T1350 the chain carries Phosphothreonine. The segment covering 1359–1368 (DLTETYKPRP) has biased composition (basic and acidic residues). Residues S1449, S1509, and S1565 each carry the phosphoserine modification. The segment at 1479–1578 (KSRSGTSSGA…TVPEHHPHPI (100 aa)) is disordered. R1624 carries the post-translational modification Asymmetric dimethylarginine. The interval 1734–1826 (TAPPPFSSRH…PISPRTQDAL (93 aa)) is disordered. The span at 1740 to 1753 (SSRHSSSPLSPGGP) shows a compositional bias: low complexity. 2 positions are modified to phosphoserine: S1746 and S1749. Over residues 1765–1778 (SERERERERERDKS) the composition is skewed to basic and acidic residues. The segment covering 1807–1826 (RPASHTHQHSPISPRTQDAL) has biased composition (polar residues). The residue at position 1819 (S1819) is a Phosphoserine. Residue R1854 is modified to Omega-N-methylarginine. 3 disordered regions span residues 1857–1878 (RSTSTSSPVRPAATFPPATHCP), 1898–1986 (KETS…KPFS), and 2001–2078 (AGYS…LQTA). The segment covering 1899-1913 (ETSRVARPERPRVDA) has biased composition (basic and acidic residues). K1920 bears the N6-acetyllysine mark. The segment covering 1925-1938 (EPASSPSKSSEPRS) has biased composition (low complexity). Residue S1963 is modified to Phosphoserine. Residue K1983 is modified to N6-acetyllysine. 5 positions are modified to phosphoserine: S2004, S2012, S2015, S2016, and S2018. T2020 is modified (phosphothreonine). The segment covering 2020–2043 (THDKGLSKPLEELEKSHLEGELRH) has biased composition (basic and acidic residues). S2035 carries the post-translational modification Phosphoserine. A compositionally biased stretch (low complexity) spans 2064–2075 (LPESQPSSSPLL). A required for interaction with RARA in the absence of its ligand region spans residues 2086–2090 (RVVTL). The short motif at 2094–2098 (ISEVI) is the CORNR box of ID1 element. The disordered stretch occupies residues 2132-2226 (RRPPSDLYLP…GNTSQPPAFF (95 aa)). Phosphoserine occurs at positions 2161, 2181, and 2215. The CORNR box of ID2 signature appears at 2296-2300 (LEAII). Residues 2343–2459 (GRSDHALTSP…HHAWDEEPKP (117 aa)) are disordered. A Phosphoserine modification is found at S2371. The segment covering 2439-2450 (LAAGSGPLAGPH) has biased composition (low complexity).

It belongs to the N-CoR nuclear receptor corepressors family. In terms of assembly, forms a large corepressor complex that contains SIN3A/B and histone deacetylases HDAC1 and HDAC2. This complex associates with the thyroid (TR) and the retinoid acid receptors (RAR) in the absence of ligand, and may stabilize their interaction with TFIIB. Interacts directly with RARA in the absence of ligand; the interaction represses RARA activity. Interacts (isoform SMRT) with HDAC10. Interacts with MINT. Component of the N-Cor repressor complex, at least composed of NCOR1, NCOR2, HDAC3, TBL1X, TBL1R, CORO2A and GPS2. Interacts with CBFA2T3 and ATXN1L. Interacts with RARB; the interaction is weak and does not repress RARB transactivational activity. Interacts (via 1D-myo-inositol 1,4,5,6-tetrakisphosphate) with HDAC3; promoting the histone deacetylase activity of HDAC3. Interacts with HDAC7 and C1D. Interacts with NR4A2; this interaction increases in the absence of PITX3. Interacts with BCL6 (via the BTB domain), required for BCL6 transcriptional repressor activity on a subset of target genes. Forms ternary complexes with BCOR and BCL6 on target gene promoters but, on enhancer elements, interacts with BCL6 and HDAC3 to repress proximal gene expression. May interact with DEAF1. Interacts with RXRA. Interacts with MECP2. Interacts with ZBTB7A. Interacts with AR. Interacts with TBL1Y. Interacts with SANBR (via the BTB domain). As to expression, ubiquitous. Also widely expressed in early embryos.

The protein resides in the nucleus. Its function is as follows. Transcriptional corepressor that mediates the transcriptional repression activity of some nuclear receptors by promoting chromatin condensation, thus preventing access of the basal transcription. Acts by recruiting chromatin modifiers, such as histone deacetylases HDAC1, HDAC2 and HDAC3. Required to activate the histone deacetylase activity of HDAC3. Involved in the regulation BCL6-dependent of the germinal center (GC) reactions, mainly through the control of the GC B-cells proliferation and survival. Recruited by ZBTB7A to the androgen response elements/ARE on target genes, negatively regulates androgen receptor signaling and androgen-induced cell proliferation. This chain is Nuclear receptor corepressor 2 (Ncor2), found in Mus musculus (Mouse).